A 178-amino-acid polypeptide reads, in one-letter code: Large ribosomal subunit protein uL6 (178 aa).

This sequence belongs to the universal ribosomal protein uL6 family. Part of the 50S ribosomal subunit.

This protein binds to the 23S rRNA, and is important in its secondary structure. It is located near the subunit interface in the base of the L7/L12 stalk, and near the tRNA binding site of the peptidyltransferase center. This Coxiella burnetii (strain CbuG_Q212) (Coxiella burnetii (strain Q212)) protein is Large ribosomal subunit protein uL6.